The chain runs to 170 residues: Adenine phosphoribosyltransferase (170 aa).

The protein belongs to the purine/pyrimidine phosphoribosyltransferase family. In terms of assembly, homodimer.

The protein resides in the cytoplasm. It carries out the reaction AMP + diphosphate = 5-phospho-alpha-D-ribose 1-diphosphate + adenine. It participates in purine metabolism; AMP biosynthesis via salvage pathway; AMP from adenine: step 1/1. Its function is as follows. Catalyzes a salvage reaction resulting in the formation of AMP, that is energically less costly than de novo synthesis. In Mesoplasma florum (strain ATCC 33453 / NBRC 100688 / NCTC 11704 / L1) (Acholeplasma florum), this protein is Adenine phosphoribosyltransferase.